Here is an 885-residue protein sequence, read N- to C-terminus: Exosome complex component 10 (885 aa).

Residues Met-1–Gln-10 are compositionally biased toward basic and acidic residues. Disordered stretches follow at residues Met-1–Glu-23 and Lys-210–Asp-232. A Glycyl lysine isopeptide (Lys-Gly) (interchain with G-Cter in SUMO2) cross-link involves residue Lys-19. Residues Ser-217–Asp-230 are compositionally biased toward basic and acidic residues. A 3'-5' exonuclease domain is found at His-289 to Leu-455. Mg(2+) contacts are provided by Asp-313, Glu-315, Asp-371, and Asp-440. The HRDC domain maps to Asn-503–Lys-583. Residue Lys-583 forms a Glycyl lysine isopeptide (Lys-Gly) (interchain with G-Cter in SUMO1); alternate linkage. Residue Lys-583 forms a Glycyl lysine isopeptide (Lys-Gly) (interchain with G-Cter in SUMO2); alternate linkage. Lys-710 participates in a covalent cross-link: Glycyl lysine isopeptide (Lys-Gly) (interchain with G-Cter in SUMO2). A disordered region spans residues Val-730–Arg-885. Basic and acidic residues-rich tracts occupy residues Lys-732–Ser-756 and Ala-776–Gln-794. The residue at position 821 (Ser-821) is a Phosphoserine. Glycyl lysine isopeptide (Lys-Gly) (interchain with G-Cter in SUMO2) cross-links involve residues Lys-833, Lys-859, and Lys-873.

This sequence belongs to the exosome component 10/RRP6 family. Component of the RNA exosome complex. The catalytically inactive RNA exosome core complex (Exo-9) associates with the catalytic subunit EXOSC10/RRP6 (via its N-terminus). Exo-9 may associate with DIS3 to form the nucleolar exosome complex, or DIS3L to form the cytoplasmic exosome complex. The RNA exosome complex interacts with cofactors C1D/RRP47, MPHOSPH6/MPP6 and MTREX/MTR4. Interacts with MTREX; the interaction with MTREX mediates the association of MTREX with nuclear RNA exosomes. Part of the small subunit (SSU) processome, composed of more than 70 proteins and the RNA chaperone small nucleolar RNA (snoRNA) U3. Interacts with ALYREF/THOC4. Interacts with DHX36; this interaction occurs in a RNase-insensitive manner. Interacts with NRDE2. Interacts (via C-terminus) with USP36 (via C-terminus); the interaction is facilitated by the association with RNA and promotes sumoylation of EXOSC10. Mg(2+) serves as cofactor. In terms of processing, sumoylated by USP36; sumoylation does not significantly affect EXOSC10 nucleolar localization and association with core exosome and USP36, but regulates the nucleolar RNA exosome activity in rRNA processing by promoting binding of EXOSC10 to pre-rRNAs. Effects of sumoylation on EXOSC10 levels vary between different studies. Sumoylation of EXOSC10 is required for the modulation of EXOSC10 effects on cellular protein translation and cell proliferation. Sumoylation is promoted by mild hypothermia. In terms of tissue distribution, expressed in testis (at protein level).

It localises to the cytoplasm. Its subcellular location is the nucleus. The protein localises to the nucleolus. The protein resides in the nucleoplasm. Its function is as follows. Catalytic component of the RNA exosome complex which has 3'-&gt;5' exoribonuclease activity and participates in a multitude of cellular RNA processing and degradation events. In the nucleus, the RNA exosome complex is involved in proper maturation of stable RNA species such as rRNA, snRNA and snoRNA, in the elimination of RNA processing by-products and non-coding 'pervasive' transcripts, such as antisense RNA species and promoter-upstream transcripts (PROMPTs), and of mRNAs with processing defects, thereby limiting or excluding their export to the cytoplasm. Part of the small subunit (SSU) processome, first precursor of the small eukaryotic ribosomal subunit. During the assembly of the SSU processome in the nucleolus, many ribosome biogenesis factors, an RNA chaperone and ribosomal proteins associate with the nascent pre-rRNA and work in concert to generate RNA folding, modifications, rearrangements and cleavage as well as targeted degradation of pre-ribosomal RNA by the RNA exosome. The RNA exosome may be involved in Ig class switch recombination (CSR) and/or Ig variable region somatic hypermutation (SHM) by targeting AICDA deamination activity to transcribed dsDNA substrates. In the cytoplasm, the RNA exosome complex is involved in general mRNA turnover and specifically degrades inherently unstable mRNAs containing AU-rich elements (AREs) within their 3' untranslated regions, and in RNA surveillance pathways, preventing translation of aberrant mRNAs. It seems to be involved in degradation of histone mRNA. EXOSC10 is required for nucleolar localization of C1D and probably mediates the association of MTREX, C1D and MPHOSPH6 with the RNA exosome involved in the maturation of 5.8S rRNA. Plays a role in the recruitment of replication protein A complex (RPA) and RAD51 to DNA double-strand breaks caused by irradiation, contributing to DNA repair by homologous recombination. Regulates levels of damage-induced RNAs in order to prevent DNA-RNA hybrid formation at DNA double-strand breaks and limit DNA end resection after damage. Plays a role in oocyte development, maturation and survival. Required for normal testis development and mitotic division of spermatogonia. Plays a role in proper embryo development. Required for global protein translation. Required for cell proliferation. This chain is Exosome complex component 10, found in Rattus norvegicus (Rat).